Here is a 93-residue protein sequence, read N- to C-terminus: Cell division protein FtsB (93 aa).

Over 1–3 (MRL) the chain is Cytoplasmic. Residues 4-21 (FILSLFALLVMFQYDFWF) traverse the membrane as a helical segment. Over 22 to 93 (GKNGYLDYQD…FYRIVKNKNR (72 aa)) the chain is Periplasmic. The stretch at 28-76 (DYQDIKAEIIQRKQENKKLSQRNQTIFAEIQDLKNGIEAIEERARMEHE) forms a coiled coil.

Belongs to the FtsB family. Part of a complex composed of FtsB, FtsL and FtsQ.

The protein resides in the cell inner membrane. Its function is as follows. Essential cell division protein. May link together the upstream cell division proteins, which are predominantly cytoplasmic, with the downstream cell division proteins, which are predominantly periplasmic. This Histophilus somni (strain 129Pt) (Haemophilus somnus) protein is Cell division protein FtsB.